Consider the following 448-residue polypeptide: Probable glycine dehydrogenase (decarboxylating) subunit 1 (448 aa).

The protein belongs to the GcvP family. N-terminal subunit subfamily. In terms of assembly, the glycine cleavage system is composed of four proteins: P, T, L and H. In this organism, the P 'protein' is a heterodimer of two subunits.

It catalyses the reaction N(6)-[(R)-lipoyl]-L-lysyl-[glycine-cleavage complex H protein] + glycine + H(+) = N(6)-[(R)-S(8)-aminomethyldihydrolipoyl]-L-lysyl-[glycine-cleavage complex H protein] + CO2. In terms of biological role, the glycine cleavage system catalyzes the degradation of glycine. The P protein binds the alpha-amino group of glycine through its pyridoxal phosphate cofactor; CO(2) is released and the remaining methylamine moiety is then transferred to the lipoamide cofactor of the H protein. In Listeria monocytogenes serotype 4b (strain CLIP80459), this protein is Probable glycine dehydrogenase (decarboxylating) subunit 1.